A 320-amino-acid polypeptide reads, in one-letter code: Methionyl-tRNA formyltransferase (320 aa).

Residue 111-114 (SLLP) coordinates (6S)-5,6,7,8-tetrahydrofolate.

Belongs to the Fmt family.

The catalysed reaction is L-methionyl-tRNA(fMet) + (6R)-10-formyltetrahydrofolate = N-formyl-L-methionyl-tRNA(fMet) + (6S)-5,6,7,8-tetrahydrofolate + H(+). In terms of biological role, attaches a formyl group to the free amino group of methionyl-tRNA(fMet). The formyl group appears to play a dual role in the initiator identity of N-formylmethionyl-tRNA by promoting its recognition by IF2 and preventing the misappropriation of this tRNA by the elongation apparatus. This is Methionyl-tRNA formyltransferase from Methylacidiphilum infernorum (isolate V4) (Methylokorus infernorum (strain V4)).